A 268-amino-acid chain; its full sequence is Malonyl-[acyl-carrier protein] O-methyltransferase 1 (268 aa).

It belongs to the methyltransferase superfamily.

It carries out the reaction malonyl-[ACP] + S-adenosyl-L-methionine = malonyl-[ACP] methyl ester + S-adenosyl-L-homocysteine. The protein operates within cofactor biosynthesis; biotin biosynthesis. Functionally, converts the free carboxyl group of a malonyl-thioester to its methyl ester by transfer of a methyl group from S-adenosyl-L-methionine (SAM). It allows to synthesize pimeloyl-ACP via the fatty acid synthetic pathway. The polypeptide is Malonyl-[acyl-carrier protein] O-methyltransferase 1 (Ilyobacter polytropus (strain ATCC 51220 / DSM 2926 / LMG 16218 / CuHBu1)).